The following is a 1182-amino-acid chain: DNA-directed RNA polymerase subunit beta (1182 aa).

Over residues 1150–1162 (DEEVEMKDEDDDN) the composition is skewed to acidic residues. The segment at 1150–1182 (DEEVEMKDEDDDNIPNATSALEQVVQPTVTEEE) is disordered. Low complexity predominate over residues 1171–1182 (EQVVQPTVTEEE).

This sequence belongs to the RNA polymerase beta chain family. In terms of assembly, the RNAP catalytic core consists of 2 alpha, 1 beta, 1 beta' and 1 omega subunit. When a sigma factor is associated with the core the holoenzyme is formed, which can initiate transcription.

The catalysed reaction is RNA(n) + a ribonucleoside 5'-triphosphate = RNA(n+1) + diphosphate. In terms of biological role, DNA-dependent RNA polymerase catalyzes the transcription of DNA into RNA using the four ribonucleoside triphosphates as substrates. The chain is DNA-directed RNA polymerase subunit beta from Exiguobacterium sp. (strain ATCC BAA-1283 / AT1b).